A 279-amino-acid chain; its full sequence is MKIENKEITSNWFTNLRDLLCKEFEKIEEEYAQTKCLKPAKFVRTSWQRNGGGGGIMSLMKGEVFEKVGVNISTVFGEFSPEFRSEIPGAELDGKFSATGISLVAHLKSPLIPAMHFNTRYIETSKSWFGGGGDLTPFYPEENETEKFHAAFKEACDKYDSGYYPKFKKQCDEYFYLKHRKEPRGVGGIFYDYLNSGNFEQDFSFTQDVGMALLSVYPEIVRSKLFLPWTAEQKEYQLIRRGRYVEFNLLYDRGTKFGLMTDGNVEAILMSLPPEVKFN.

Residue S102 participates in substrate binding. A divalent metal cation contacts are provided by H106 and H116. H116 serves as the catalytic Proton donor. 118–120 contacts substrate; sequence NTR. H149 and H179 together coordinate a divalent metal cation. Residues 244-279 form an important for dimerization region; the sequence is YVEFNLLYDRGTKFGLMTDGNVEAILMSLPPEVKFN.

This sequence belongs to the aerobic coproporphyrinogen-III oxidase family. As to quaternary structure, homodimer. The cofactor is a divalent metal cation.

It localises to the cytoplasm. It catalyses the reaction coproporphyrinogen III + O2 + 2 H(+) = protoporphyrinogen IX + 2 CO2 + 2 H2O. It participates in porphyrin-containing compound metabolism; protoporphyrin-IX biosynthesis; protoporphyrinogen-IX from coproporphyrinogen-III (O2 route): step 1/1. In terms of biological role, involved in the heme biosynthesis. Catalyzes the aerobic oxidative decarboxylation of propionate groups of rings A and B of coproporphyrinogen-III to yield the vinyl groups in protoporphyrinogen-IX. This Rickettsia akari (strain Hartford) protein is Oxygen-dependent coproporphyrinogen-III oxidase.